The sequence spans 232 residues: MELSEHEEDAGDVGGGCSSPPTPPHRVLTSAAPETIRCRYHECLRNHAAASGGHVVDGCGEFMPASTEEPLACAACGCHRSFHRRDPSPGRAGAARLLQLHLPASINSRAPPALLLPPAAAASKQGLPFPGYGTPSGGTGTTTASSSDERLRPSPVQPRRRSRTTFTREQKEQMLAFAERVGWRIQRQEEATVEHFCAQVGVRRQALKVWMHNNKHSFKQKQQQENRQEQQQ.

The segment covering 1–11 (MELSEHEEDAG) has biased composition (acidic residues). Positions 1–25 (MELSEHEEDAGDVGGGCSSPPTPPH) are disordered. The segment at 40-86 (YHECLRNHAAASGGHVVDGCGEFMPASTEEPLACAACGCHRSFHRRD) adopts a ZF-HD dimerization-type; degenerate zinc-finger fold. A disordered region spans residues 126–170 (GLPFPGYGTPSGGTGTTTASSSDERLRPSPVQPRRRSRTTFTREQ). A DNA-binding region (homeobox) is located at residues 159-222 (RRRSRTTFTR…NNKHSFKQKQ (64 aa)).

Homo- and heterodimer with other ZFHD proteins.

It localises to the nucleus. Its function is as follows. Putative transcription factor. This is Zinc-finger homeodomain protein 5 (ZHD5) from Oryza sativa subsp. indica (Rice).